The chain runs to 99 residues: Large ribosomal subunit protein bL27 (99 aa).

Residues 1–9 constitute a propeptide that is removed on maturation; the sequence is MLLMNLQLF.

It belongs to the bacterial ribosomal protein bL27 family. The N-terminus is cleaved by ribosomal processing cysteine protease Prp.

This is Large ribosomal subunit protein bL27 from Clostridium novyi (strain NT).